The following is a 237-amino-acid chain: Sugar fermentation stimulation protein homolog (237 aa).

The protein belongs to the SfsA family.

This chain is Sugar fermentation stimulation protein homolog, found in Azorhizobium caulinodans (strain ATCC 43989 / DSM 5975 / JCM 20966 / LMG 6465 / NBRC 14845 / NCIMB 13405 / ORS 571).